Reading from the N-terminus, the 822-residue chain is MTKLSGQELHAELSRRAFLSYTAAVGALGLCGTSLLAQGARAEGLANGEVMSGCHWGVFKARVENGRAVAFEPWDKDPAPSHQLPGVLDSIYSPTRIKYPMVRREFLEKGVNADRSTRGNGDFVRVTWDEALDLVARELKRVQESYGPTGTFGGSYGWKSPGRLHNCQVLMRRALNLAGGFVNSSGDYSTAAAQIIMPHVMGTLEVYEQQTAWPVVVENTDLMVFWAADPMKTNEIGWVIPDHGAYAGMKALKEKGTRVICINPVRTETADYFGADVVSPRPQTDVALMLGMAHTLYSEDLHDKDFLENCTTGFDLFAAYLTGESDGTPKTAEWAAEICGLPAEQIRELARSFVAGRTMLAAGWSIQRMHHGEQAHWMLVTLASMIGQIGLPGGGFGLSYHYSNGGSPTSDGPALGGISDGGKAVEGAAWLSESGATSIPCARVVDMLLNPGGEFQFNGATATYPDVKLAYWAGGNPFAHHQDRNRMLKAWEKLETFIVQDFQWTATARHADIVLPATTSYERNDIESVGDYSNRAILAMKKVVDPLYEARSDYDIFAALAERLGKGAEFTEGRDEMGWISSFYEAAVKQAEFKNVAMPSFEDFWSEGIVEFPITEGANFVRYADFREDPLFNPLGTPSGLIEIYSKNIEKMGYDDCPAHPTWMEPAERLGGAGAKYPLHVVASHPKSRLHSQLNGTSLRDLYAVAGHEPCLINPADAAARGIADGDVLRVFNDRGQILVGAKVSDAVMPGAIQIYEGGWYDPLDPSEEGTLDKYGDVNVLSLDVGTSKLAQGNCGQTILADVEKYAGAPVTVTVFDTPKGA.

Residues 1–42 constitute a signal peptide (tat-type signal); it reads MTKLSGQELHAELSRRAFLSYTAAVGALGLCGTSLLAQGARA. Residues W158, 158–160, S189, 232–233, 262–263, 283–285, 364–365, R368, N476, H480, 500–501, R523, D553, 683–686, R689, 691–693, N779, and 796–797 each bind Mo-bis(molybdopterin guanine dinucleotide); these read WKS, KT, IN, QTD, WS, QD, ASHP, HSQ, and GQ.

This sequence belongs to the prokaryotic molybdopterin-containing oxidoreductase family. As to quaternary structure, homodimer. Mo-bis(molybdopterin guanine dinucleotide) serves as cofactor. In terms of processing, predicted to be exported by the Tat system. The position of the signal peptide cleavage has been experimentally proven.

Its subcellular location is the periplasm. It carries out the reaction dimethyl sulfide + a menaquinone + H2O = dimethyl sulfoxide + a menaquinol. It catalyses the reaction trimethylamine + 2 Fe(III)-[cytochrome c] + H2O = trimethylamine N-oxide + 2 Fe(II)-[cytochrome c] + 3 H(+). Catalyzes the reduction of dimethyl sulfoxide (DMSO) and trimethylamine N-oxide (TMAO) to dimethyl sulfide (DMS) and trimethylamine, respectively. The terminal DMSO reductase can also use various sulfoxides and N-oxide compounds as terminal electron acceptor in addition to DMSO and TMAO. This chain is Dimethyl sulfoxide/trimethylamine N-oxide reductase (dmsA), found in Cereibacter sphaeroides (Rhodobacter sphaeroides).